Here is an 88-residue protein sequence, read N- to C-terminus: Parvalbumin beta 3 (88 aa).

An N-acetylalanine modification is found at A1. Residues 31–66 (KSPEEVKKFFAIIDQDHSGFIEEEELKLFLQTFSAG) form the EF-hand domain. Ca(2+)-binding residues include D44, D46, S48, F50, E52, E55, and E81.

The protein belongs to the parvalbumin family.

Its function is as follows. In muscle, parvalbumin is thought to be involved in relaxation after contraction. It binds two calcium ions. The chain is Parvalbumin beta 3 from Merluccius productus (North Pacific hake).